Consider the following 85-residue polypeptide: Thioredoxin (85 aa).

A Glutaredoxin domain is found at 1–85 (MSKVKIELFT…ALVEAIKKRL (85 aa)). Cysteines 14 and 17 form a disulfide.

It belongs to the glutaredoxin family.

Its subcellular location is the cytoplasm. Its function is as follows. Acts to maintain redox homeostasis; functions as a protein disulfide reductase. In Methanocaldococcus jannaschii (strain ATCC 43067 / DSM 2661 / JAL-1 / JCM 10045 / NBRC 100440) (Methanococcus jannaschii), this protein is Thioredoxin (trx).